A 169-amino-acid chain; its full sequence is Putative 3-methyladenine DNA glycosylase (169 aa).

The protein belongs to the DNA glycosylase MPG family.

The sequence is that of Putative 3-methyladenine DNA glycosylase from Wolbachia sp. subsp. Brugia malayi (strain TRS).